Reading from the N-terminus, the 284-residue chain is Succinate dehydrogenase [ubiquinone] iron-sulfur subunit, mitochondrial (284 aa).

The transit peptide at 1–26 (MAAVVFSLRRSGPVFRLPGVLQVCRG) directs the protein to the mitochondrion. Residues 44 to 137 (KKFAIYRWDP…VSKIYPLPHM (94 aa)) form the 2Fe-2S ferredoxin-type domain. 4 residues coordinate [2Fe-2S] cluster: Cys97, Cys102, Cys105, and Cys117. The region spanning 180 to 210 (DRDKLDGLYECILCACCSTSCPSYWWNADKY) is the 4Fe-4S ferredoxin-type domain. [4Fe-4S] cluster is bound by residues Cys190, Cys193, and Cys196. Position 200 (Cys200) interacts with [3Fe-4S] cluster. Trp205 lines the a ubiquinone pocket. [3Fe-4S] cluster-binding residues include Cys247 and Cys253. Cys257 is a [4Fe-4S] cluster binding site.

This sequence belongs to the succinate dehydrogenase/fumarate reductase iron-sulfur protein family. As to quaternary structure, component of complex II composed of four subunits: the flavoprotein (FP) sdha, iron-sulfur protein (IP) sdhb, and a cytochrome b composed of sdhc and sdhd. The cofactor is [2Fe-2S] cluster. Requires [3Fe-4S] cluster as cofactor. [4Fe-4S] cluster serves as cofactor.

The protein localises to the mitochondrion inner membrane. It catalyses the reaction a quinone + succinate = fumarate + a quinol. The enzyme catalyses (R)-malate + a quinone = enol-oxaloacetate + a quinol. It carries out the reaction (S)-malate + a quinone = enol-oxaloacetate + a quinol. It participates in carbohydrate metabolism; tricarboxylic acid cycle; fumarate from succinate (eukaryal route): step 1/1. Its activity is regulated as follows. Enol-oxaloacetate inhibits the succinate dehydrogenase activity. Iron-sulfur protein (IP) subunit of the succinate dehydrogenase complex (mitochondrial respiratory chain complex II), responsible for transferring electrons from succinate to ubiquinone (coenzyme Q). SDH also oxidizes malate to the non-canonical enol form of oxaloacetate, enol-oxaloacetate. Enol-oxaloacetate, which is a potent inhibitor of the succinate dehydrogenase activity, is further isomerized into keto-oxaloacetate. The polypeptide is Succinate dehydrogenase [ubiquinone] iron-sulfur subunit, mitochondrial (sdhb) (Xenopus tropicalis (Western clawed frog)).